A 195-amino-acid chain; its full sequence is Guanylate kinase (195 aa).

In terms of domain architecture, Guanylate kinase-like spans 10–189; it reads GRLIVFSAPS…TVDAVATRIA (180 aa). An ATP-binding site is contributed by 17–24; sequence APSGTGKS.

The protein belongs to the guanylate kinase family.

It localises to the cytoplasm. The enzyme catalyses GMP + ATP = GDP + ADP. Its function is as follows. Essential for recycling GMP and indirectly, cGMP. The polypeptide is Guanylate kinase (Chlorobaculum tepidum (strain ATCC 49652 / DSM 12025 / NBRC 103806 / TLS) (Chlorobium tepidum)).